The primary structure comprises 139 residues: D-ribose pyranase (139 aa).

His-20 serves as the catalytic Proton donor. Residues Asp-28, His-106, and 128–130 (YAN) each bind substrate.

It belongs to the RbsD / FucU family. RbsD subfamily. In terms of assembly, homodecamer.

Its subcellular location is the cytoplasm. It carries out the reaction beta-D-ribopyranose = beta-D-ribofuranose. Its pathway is carbohydrate metabolism; D-ribose degradation; D-ribose 5-phosphate from beta-D-ribopyranose: step 1/2. Functionally, catalyzes the interconversion of beta-pyran and beta-furan forms of D-ribose. In Enterobacter sp. (strain 638), this protein is D-ribose pyranase.